Consider the following 507-residue polypeptide: Zinc finger CCCH-type with G patch domain-containing protein (507 aa).

Met1 carries the post-translational modification N-acetylmethionine. Positions 88–125 (PVDPGNDSKTVPGSEVQPTPTSSALEEEEEDPDLEDLS) are disordered. A compositionally biased stretch (polar residues) spans 94–111 (DSKTVPGSEVQPTPTSSA). Over residues 112 to 123 (LEEEEEDPDLED) the composition is skewed to acidic residues. The segment at 170-196 (KSLKPCPFFLEGKCRFKENCRFSHGQL) adopts a C3H1-type zinc-finger fold. Residues 264 to 283 (LRTEATDSSDSDTGDASDSS) are disordered. The residue at position 272 (Ser272) is a Phosphoserine. Position 276 is a phosphothreonine (Thr276). The 47-residue stretch at 309-355 (TRGIGSKLLVKMGYEFGKGLGRHAEGRVEPIHAVVLPRGKSLDQCAE) folds into the G-patch domain. Ser349 carries the phosphoserine modification. Disordered regions lie at residues 359-389 (KKTK…PPRN) and 486-507 (AQEA…MTEF). The segment covering 487-507 (QEADLQRKQRKADTHRKMTEF) has biased composition (basic and acidic residues).

Interacts with CHD4/Mi-2; the interaction is direct.

The protein localises to the nucleus. In terms of biological role, transcription repressor that specifically binds the 5'-GGAG[GA]A[GA]A-3' consensus sequence. Represses transcription by recruiting the chromatin multiprotein complex NuRD to target promoters. Negatively regulates expression of EGFR, a gene involved in cell proliferation, survival and migration. Its ability to repress genes of the EGFR pathway suggest it may act as a tumor suppressor. The protein is Zinc finger CCCH-type with G patch domain-containing protein (Zgpat) of Rattus norvegicus (Rat).